Consider the following 61-residue polypeptide: Alpha-conotoxin-like Lp1.6a (61 aa).

An N-terminal signal peptide occupies residues 1–21 (MGMRMMFIIFLFVVLATTVVS). A propeptide spanning residues 22–44 (FTSGRASDGRNAPANNKVSDLIR) is cleaved from the precursor. Residue glutamine 45 is modified to Pyrrolidone carboxylic acid. Cystine bridges form between cysteine 47–cysteine 53 and cysteine 48–cysteine 60. Cysteine 60 carries the post-translational modification Cysteine amide.

This sequence belongs to the conotoxin A superfamily. Expressed by the venom duct.

It is found in the secreted. Its function is as follows. Alpha-conotoxins act on postsynaptic membranes, they bind to the nicotinic acetylcholine receptors (nAChR) and thus inhibit them. The sequence is that of Alpha-conotoxin-like Lp1.6a from Conus leopardus (Leopard cone).